A 231-amino-acid chain; its full sequence is Ribonuclease 3 (231 aa).

Residues 5 to 134 (QKGIKEDFGI…FIGALYKDQG (130 aa)) enclose the RNase III domain. Glutamate 47 is a binding site for Mg(2+). Residue aspartate 51 is part of the active site. The Mg(2+) site is built by aspartate 120 and glutamate 123. Glutamate 123 is a catalytic residue. In terms of domain architecture, DRBM spans 160-230 (DYKSKLQELL…AKKAYQDVTP (71 aa)).

Belongs to the ribonuclease III family. As to quaternary structure, homodimer. The cofactor is Mg(2+).

It localises to the cytoplasm. It catalyses the reaction Endonucleolytic cleavage to 5'-phosphomonoester.. Its function is as follows. Digests double-stranded RNA. Involved in the processing of primary rRNA transcript to yield the immediate precursors to the large and small rRNAs (23S and 16S). Processes some mRNAs, and tRNAs when they are encoded in the rRNA operon. Processes pre-crRNA and tracrRNA of type II CRISPR loci if present in the organism. This chain is Ribonuclease 3, found in Oenococcus oeni (strain ATCC BAA-331 / PSU-1).